The sequence spans 427 residues: Serine--tRNA ligase (427 aa).

231-233 (TAE) contacts L-serine. 262 to 264 (RSE) contributes to the ATP binding site. L-serine is bound at residue glutamate 285. Residue 349–352 (EISS) participates in ATP binding. Serine 385 is a binding site for L-serine.

This sequence belongs to the class-II aminoacyl-tRNA synthetase family. Type-1 seryl-tRNA synthetase subfamily. Homodimer. The tRNA molecule binds across the dimer.

Its subcellular location is the cytoplasm. The enzyme catalyses tRNA(Ser) + L-serine + ATP = L-seryl-tRNA(Ser) + AMP + diphosphate + H(+). The catalysed reaction is tRNA(Sec) + L-serine + ATP = L-seryl-tRNA(Sec) + AMP + diphosphate + H(+). The protein operates within aminoacyl-tRNA biosynthesis; selenocysteinyl-tRNA(Sec) biosynthesis; L-seryl-tRNA(Sec) from L-serine and tRNA(Sec): step 1/1. Catalyzes the attachment of serine to tRNA(Ser). Is also able to aminoacylate tRNA(Sec) with serine, to form the misacylated tRNA L-seryl-tRNA(Sec), which will be further converted into selenocysteinyl-tRNA(Sec). This Exiguobacterium sp. (strain ATCC BAA-1283 / AT1b) protein is Serine--tRNA ligase.